We begin with the raw amino-acid sequence, 575 residues long: DNA-directed RNA polymerase subunit beta' (575 aa).

It belongs to the RNA polymerase beta' chain family. In terms of assembly, in plastids the minimal PEP RNA polymerase catalytic core is composed of four subunits: alpha, beta, beta', and beta''. When a (nuclear-encoded) sigma factor is associated with the core the holoenzyme is formed, which can initiate transcription.

It localises to the plastid. The protein resides in the apicoplast. The enzyme catalyses RNA(n) + a ribonucleoside 5'-triphosphate = RNA(n+1) + diphosphate. In terms of biological role, DNA-dependent RNA polymerase catalyzes the transcription of DNA into RNA using the four ribonucleoside triphosphates as substrates. The protein is DNA-directed RNA polymerase subunit beta' (rpoC1) of Plasmodium falciparum (isolate 3D7).